The chain runs to 69 residues: Large ribosomal subunit protein bL32c (69 aa).

The protein belongs to the bacterial ribosomal protein bL32 family.

Its subcellular location is the plastid. The protein resides in the chloroplast. This is Large ribosomal subunit protein bL32c (rpl32) from Anthoceros angustus (Hornwort).